The primary structure comprises 159 residues: Putative ribosomal RNA large subunit methyltransferase H (159 aa).

S-adenosyl-L-methionine is bound by residues Leu76, Gly108, and 127–132 (FSKMTF).

This sequence belongs to the RNA methyltransferase RlmH family.

It localises to the cytoplasm. It carries out the reaction pseudouridine(1915) in 23S rRNA + S-adenosyl-L-methionine = N(3)-methylpseudouridine(1915) in 23S rRNA + S-adenosyl-L-homocysteine + H(+). Its function is as follows. Specifically methylates the pseudouridine at position 1915 (m3Psi1915) in 23S rRNA. In Methanococcus maripaludis (strain DSM 14266 / JCM 13030 / NBRC 101832 / S2 / LL), this protein is Putative ribosomal RNA large subunit methyltransferase H.